Here is a 461-residue protein sequence, read N- to C-terminus: Proline--tRNA ligase (461 aa).

The protein belongs to the class-II aminoacyl-tRNA synthetase family. ProS type 3 subfamily. In terms of assembly, homodimer.

It localises to the cytoplasm. The catalysed reaction is tRNA(Pro) + L-proline + ATP = L-prolyl-tRNA(Pro) + AMP + diphosphate. In terms of biological role, catalyzes the attachment of proline to tRNA(Pro) in a two-step reaction: proline is first activated by ATP to form Pro-AMP and then transferred to the acceptor end of tRNA(Pro). This chain is Proline--tRNA ligase, found in Methanococcus vannielii (strain ATCC 35089 / DSM 1224 / JCM 13029 / OCM 148 / SB).